We begin with the raw amino-acid sequence, 121 residues long: Large ribosomal subunit protein uL14c (121 aa).

In terms of assembly, component of the chloroplast large ribosomal subunit (LSU). Mature 70S chloroplast ribosomes of higher plants consist of a small (30S) and a large (50S) subunit. The 30S small subunit contains 1 molecule of ribosomal RNA (16S rRNA) and 24 different proteins. The 50S large subunit contains 3 rRNA molecules (23S, 5S and 4.5S rRNA) and 33 different proteins.

It localises to the plastid. The protein localises to the chloroplast. Component of the chloroplast ribosome (chloro-ribosome), a dedicated translation machinery responsible for the synthesis of chloroplast genome-encoded proteins, including proteins of the transcription and translation machinery and components of the photosynthetic apparatus. The polypeptide is Large ribosomal subunit protein uL14c (Spinacia oleracea (Spinach)).